Consider the following 397-residue polypeptide: Protein Brevis radix-like 1 (397 aa).

Disordered stretches follow at residues 14-37 and 105-148; these read GAPPLREQSDDADDAAVARGAGEC and RAGS…EDDE. The span at 124 to 148 shows a compositional bias: acidic residues; sequence AGDEEEEEEEEEEEGTTADGSEDDE. The region spanning 150 to 205 is the BRX 1 domain; the sequence is KEWVAQVEPGVLITFLSLPEGGNDLKRIRFSREIFNKWQAQRWWAENYEKVMELYN. Disordered stretches follow at residues 212–278 and 300–342; these read QTPL…QQHH and SISG…DQER. Residues 220–230 are compositionally biased toward basic and acidic residues; sequence KSEDESLKEDI. A compositionally biased stretch (low complexity) spans 309-320; it reads SSMDASMRSSSS. The BRX 2 domain maps to 342-397; the sequence is REWVEEDEPGVYITIRALPGGIRELRRVRFSREKFSEMHARLWWEENRARIHDQYL.

This sequence belongs to the BRX family.

It is found in the nucleus. This Oryza sativa subsp. japonica (Rice) protein is Protein Brevis radix-like 1 (BRXL1).